A 562-amino-acid polypeptide reads, in one-letter code: DNA ligase (562 aa).

E252 is an ATP binding site. The N6-AMP-lysine intermediate role is filled by K254. Positions 259, 274, 303, 343, 419, and 425 each coordinate ATP.

The protein belongs to the ATP-dependent DNA ligase family. It depends on Mg(2+) as a cofactor.

It carries out the reaction ATP + (deoxyribonucleotide)n-3'-hydroxyl + 5'-phospho-(deoxyribonucleotide)m = (deoxyribonucleotide)n+m + AMP + diphosphate.. Its function is as follows. DNA ligase that seals nicks in double-stranded DNA during DNA replication, DNA recombination and DNA repair. The sequence is that of DNA ligase from Methanococcus aeolicus (strain ATCC BAA-1280 / DSM 17508 / OCM 812 / Nankai-3).